Consider the following 398-residue polypeptide: O-methyltransferase penC (398 aa).

Residue aspartate 263 participates in S-adenosyl-L-methionine binding. Histidine 305 acts as the Proton acceptor in catalysis.

This sequence belongs to the class I-like SAM-binding methyltransferase superfamily. Cation-independent O-methyltransferase family.

It participates in secondary metabolite biosynthesis. It functions in the pathway alkaloid biosynthesis. Its pathway is mycotoxin biosynthesis. O-methyltransferase; part of the gene cluster that mediates the biosynthesis of penigequinolones, potent insecticidal alkaloids that contain a highly modified 10-carbon prenyl group. The first stage is catalyzed by the nonribosomal peptide synthetase penN that condenses anthranilic acid and O-methyl-L-tyrosine to produce 4'-methoxycyclopeptin. 4'-methoxycyclopeptin is then converted to 4'-methoxydehydrocyclopeptin by the ketoglutarate-dependent dioxygenase penM through dehydrogenation to form a double bond between C-alpha and C-beta of the O-methyltyrosine side chain. PenM also converts its first product methoxydehydrocyclopeptin to 4'-methoxycyclopenin. The following conversion of 4'methoxycyclopenin into 4'-methoxyviridicatin is catalyzed by the cyclopenase penL. 4'-methoxyviridicatin is the precursor of quinolone natural products, and is further converted to quinolinone B. The prenyltransferase penI then catalyzes the canonical Friedel-Crafts alkylation of quinolinone B with dimethylallyl cation to yield dimethylallyl quinolone, which is subjected to FAD-dependent dehydrogenation by the FAD-linked oxidoreductase penH to yield conjugated aryl diene. The delta(3') double bond then serves as the site of the second alkylation with DMAPP catalyzed by the prenyltransferase penG to yield a carbenium ion intermediate, which can be attacked by H(2)O to yield a styrenyl quinolone containing a C3'-hydroxyprenyl chain, or undergo cyclization to yield yaequinolones J1 and J2. The conversion of the styrenyl quinolone into the tetrahydrofuran-containing yaequinolone C is performed by the FAD-dependent monooxygenase penE and involves epoxidation of the terminal C7'-C8' olefin, followed by epoxide ring opening initiated by the C3' hydroxyl group. The predicted cysteine hydrolase penJ acts as an epoxide hydrolase that enhances the rate of the 5-exo-tet cyclization step, increasing the yield of yaequinolone C. PenF catalyzes the cationic rearrangement of the epoxide formed by penE (before ring opening to produce yaequinolone C) into yaequinolone D. Finally, the short-chain dehydrogenase/reductase (SDR)-like reductase penD, catalyzes both the dehydration of yaequinolone D and the reduction of the resulting oxonium to yield penigequinolone. The protein is O-methyltransferase penC of Penicillium thymicola.